Consider the following 488-residue polypeptide: 1-hydroxycarotenoid 3,4-desaturase (488 aa).

Residues glutamate 31, lysine 39, 55 to 56, valine 247, asparagine 275, leucine 431, glycine 461, and 468 to 469 each bind FAD; these read SL and GI.

This sequence belongs to the carotenoid/retinoid oxidoreductase family. Monomer.

The enzyme catalyses rhodopin + A = (3E)-3,4-didehydrorhodopin + AH2. The catalysed reaction is 1'-hydroxy-gamma-carotene + A = 1'-hydroxytorulene + AH2. It catalyses the reaction 1-hydroxy-all-trans-1,2-dihydro-neurosporene + A = demethylspheroidene + AH2. It carries out the reaction 1,1'-dihydroxy-1,1',2,2'-tetrahydroneurosporene + A = 1'-hydroxy-demethylspheroidene + AH2. The enzyme catalyses 1,1'-dihydroxy-1,1',2,2'-tetrahydrolycopene + A = 1,1'-dihydroxy-3,4-didehydro-1,2-dihydrolycopene + AH2. Its pathway is carotenoid biosynthesis. Catalyzes the introduction of a C-3,4 double bond into 1'-hydroxy-gamma-carotene and rhodopin (1-hydroxylycopene) to yield 1'-hydroxytorulene and (3E)-3,4-didehydrorhodopin, respectively. Can also 1-hydroxy-all-trans-1,2-dihydro-neurosporene, 1,1'-dihydroxy-1,1',2,2'-tetrahydroneurosporene and 1,1'-dihydroxy-1,1',2,2'-tetrahydrolycopene. Probably involved in the synthesis of myxol, a gamma-carotene derivative. May use FAD as a proton acceptor. This Flavobacterium sp. (strain P99-3) protein is 1-hydroxycarotenoid 3,4-desaturase.